We begin with the raw amino-acid sequence, 536 residues long: CUGBP Elav-like family member 2 (536 aa).

RRM domains follow at residues 58-141, 150-230, and 451-529; these read IKMF…PADS, RKLF…FADT, and ANLF…LKRS.

This sequence belongs to the CELF/BRUNOL family.

It localises to the nucleus. Its subcellular location is the cytoplasm. Functionally, RNA-binding protein implicated in the regulation of several post-transcriptional events. May be involved in pre-mRNA alternative splicing, mRNA translation repression and stability. In Xenopus laevis (African clawed frog), this protein is CUGBP Elav-like family member 2 (celf2).